We begin with the raw amino-acid sequence, 134 residues long: Large ribosomal subunit protein bL21 (134 aa).

Belongs to the bacterial ribosomal protein bL21 family. As to quaternary structure, part of the 50S ribosomal subunit. Contacts protein L20.

This protein binds to 23S rRNA in the presence of protein L20. The sequence is that of Large ribosomal subunit protein bL21 from Pelagibacter ubique (strain HTCC1062).